The primary structure comprises 567 residues: DNA ligase (567 aa).

Glu246 provides a ligand contact to ATP. Residue Lys248 is the N6-AMP-lysine intermediate of the active site. Residues Arg253, Arg268, Glu298, Phe339, Arg415, and Lys421 each coordinate ATP.

This sequence belongs to the ATP-dependent DNA ligase family. Mg(2+) serves as cofactor.

The catalysed reaction is ATP + (deoxyribonucleotide)n-3'-hydroxyl + 5'-phospho-(deoxyribonucleotide)m = (deoxyribonucleotide)n+m + AMP + diphosphate.. Its function is as follows. DNA ligase that seals nicks in double-stranded DNA during DNA replication, DNA recombination and DNA repair. This chain is DNA ligase, found in Nanoarchaeum equitans (strain Kin4-M).